A 316-amino-acid polypeptide reads, in one-letter code: Conjugated bile acid hydrolase (316 aa).

C2 acts as the Nucleophile in catalysis. Positions 2 and 18 each coordinate deoxycholate. A taurine-binding site is contributed by N81.

This sequence belongs to the peptidase C59 family.

The catalysed reaction is cholate + taurine = taurocholate + H2O. It carries out the reaction taurochenodeoxycholate + H2O = chenodeoxycholate + taurine. It catalyses the reaction taurodeoxycholate + H2O = deoxycholate + taurine. The enzyme catalyses glycocholate + H2O = cholate + glycine. The catalysed reaction is glycodeoxycholate + H2O = deoxycholate + glycine. It participates in lipid metabolism; bile acid biosynthesis. Functionally, bile salt hydrolase that catalyzes the deconjugation of glycine- and taurine-linked bile salts, which occurs naturally in the intestines of humans, releasing amino acid residues and deconjugated bile salts (bile acids). Can hydrolyze the amide bond in the bile salts taurocholate (TCA), taurodeoxycholate (TDCA), taurochenodeoxycholate (TCDCA), glycocholate (GCA) and glycodeoxycholate (GDCA). Shows highest activity toward the taurine-conjugated bile salts TCA and TCDCA. The activity toward the other three substrates (TDCA, GCA and GDCA) is relatively low. This enzyme likely contributes to bile salt resistance of the strain and may be associated with survival capability of strain JCM1131 within the human intestine by bile detoxification. In Lactobacillus gasseri (strain ATCC 33323 / DSM 20243 / BCRC 14619 / CIP 102991 / JCM 1131 / KCTC 3163 / NCIMB 11718 / NCTC 13722 / AM63), this protein is Conjugated bile acid hydrolase.